The following is a 248-amino-acid chain: Ubiquinone/menaquinone biosynthesis C-methyltransferase UbiE (248 aa).

Residues Ser-68, Asp-92, and 120–121 contribute to the S-adenosyl-L-methionine site; that span reads NA.

The protein belongs to the class I-like SAM-binding methyltransferase superfamily. MenG/UbiE family.

The enzyme catalyses a 2-demethylmenaquinol + S-adenosyl-L-methionine = a menaquinol + S-adenosyl-L-homocysteine + H(+). It carries out the reaction a 2-methoxy-6-(all-trans-polyprenyl)benzene-1,4-diol + S-adenosyl-L-methionine = a 5-methoxy-2-methyl-3-(all-trans-polyprenyl)benzene-1,4-diol + S-adenosyl-L-homocysteine + H(+). It participates in quinol/quinone metabolism; menaquinone biosynthesis; menaquinol from 1,4-dihydroxy-2-naphthoate: step 2/2. It functions in the pathway cofactor biosynthesis; ubiquinone biosynthesis. Methyltransferase required for the conversion of demethylmenaquinol (DMKH2) to menaquinol (MKH2) and the conversion of 2-polyprenyl-6-methoxy-1,4-benzoquinol (DDMQH2) to 2-polyprenyl-3-methyl-6-methoxy-1,4-benzoquinol (DMQH2). This chain is Ubiquinone/menaquinone biosynthesis C-methyltransferase UbiE, found in Rickettsia typhi (strain ATCC VR-144 / Wilmington).